We begin with the raw amino-acid sequence, 231 residues long: 5'-methylthioadenosine/S-adenosylhomocysteine nucleosidase (231 aa).

The active-site Proton acceptor is the glutamate 13. Substrate-binding positions include glycine 79, methionine 153, and 174–175; that span reads ME. The active-site Proton donor is aspartate 198.

Belongs to the PNP/UDP phosphorylase family. MtnN subfamily.

It carries out the reaction S-adenosyl-L-homocysteine + H2O = S-(5-deoxy-D-ribos-5-yl)-L-homocysteine + adenine. The enzyme catalyses S-methyl-5'-thioadenosine + H2O = 5-(methylsulfanyl)-D-ribose + adenine. It catalyses the reaction 5'-deoxyadenosine + H2O = 5-deoxy-D-ribose + adenine. It functions in the pathway amino-acid biosynthesis; L-methionine biosynthesis via salvage pathway; S-methyl-5-thio-alpha-D-ribose 1-phosphate from S-methyl-5'-thioadenosine (hydrolase route): step 1/2. Functionally, catalyzes the irreversible cleavage of the glycosidic bond in both 5'-methylthioadenosine (MTA) and S-adenosylhomocysteine (SAH/AdoHcy) to adenine and the corresponding thioribose, 5'-methylthioribose and S-ribosylhomocysteine, respectively. Also cleaves 5'-deoxyadenosine, a toxic by-product of radical S-adenosylmethionine (SAM) enzymes, into 5-deoxyribose and adenine. The protein is 5'-methylthioadenosine/S-adenosylhomocysteine nucleosidase of Halalkalibacterium halodurans (strain ATCC BAA-125 / DSM 18197 / FERM 7344 / JCM 9153 / C-125) (Bacillus halodurans).